Here is a 264-residue protein sequence, read N- to C-terminus: Putative serine carboxypeptidase-like 53 (264 aa).

The N-terminal stretch at 1 to 23 (MGKLQDWSITTCLFLFFLHASQT) is a signal peptide. Residues Asn-65, Asn-101, Asn-153, and Asn-184 are each glycosylated (N-linked (GlcNAc...) asparagine).

This sequence belongs to the peptidase S10 family.

The protein localises to the secreted. The polypeptide is Putative serine carboxypeptidase-like 53 (SCPL53) (Arabidopsis thaliana (Mouse-ear cress)).